A 408-amino-acid polypeptide reads, in one-letter code: tRNA pseudouridine synthase D (408 aa).

Residue D82 is the Nucleophile of the active site. Residues 157–367 (GVPNRFGEQR…MEGERRPLRV (211 aa)) enclose the TRUD domain.

Belongs to the pseudouridine synthase TruD family.

The enzyme catalyses uridine(13) in tRNA = pseudouridine(13) in tRNA. Its function is as follows. Responsible for synthesis of pseudouridine from uracil-13 in transfer RNAs. The protein is tRNA pseudouridine synthase D of Geobacter sulfurreducens (strain ATCC 51573 / DSM 12127 / PCA).